Consider the following 128-residue polypeptide: Mediator of RNA polymerase II transcription subunit 31-A (128 aa).

Belongs to the Mediator complex subunit 31 family. As to quaternary structure, component of the Mediator complex.

The protein localises to the nucleus. Its function is as follows. Component of the Mediator complex, a coactivator involved in the regulated transcription of nearly all RNA polymerase II-dependent genes. Mediator functions as a bridge to convey information from gene-specific regulatory proteins to the basal RNA polymerase II transcription machinery. Mediator is recruited to promoters by direct interactions with regulatory proteins and serves as a scaffold for the assembly of a functional preinitiation complex with RNA polymerase II and the general transcription factors. The polypeptide is Mediator of RNA polymerase II transcription subunit 31-A (med31-a) (Xenopus laevis (African clawed frog)).